The following is a 209-amino-acid chain: MKTQNIPKATIKRLAVYIQVLTGLKRDGVEVISSEKLARACSVNPSQIRKDLAYFGEFGVRGVGYYVHELISSIKQSLGVDRVWGCALVGVGNLGRALLRHKEFALRGFSIRAAFDCDPYKIGEVVSGLEVVCTRQFKARVEELGLEIGIITTPPERAQRAANYLVDGGIKGIVNFAQARIDVPKNVPVEYVDFTHHFYSVAFNISSME.

The H-T-H motif DNA-binding region spans 16 to 55 (VYIQVLTGLKRDGVEVISSEKLARACSVNPSQIRKDLAYF). Residue 90 to 95 (GVGNLG) coordinates NAD(+).

The protein belongs to the transcriptional regulatory Rex family. In terms of assembly, homodimer.

It is found in the cytoplasm. Functionally, modulates transcription in response to changes in cellular NADH/NAD(+) redox state. The chain is Redox-sensing transcriptional repressor Rex from Maridesulfovibrio salexigens (strain ATCC 14822 / DSM 2638 / NCIMB 8403 / VKM B-1763) (Desulfovibrio salexigens).